Here is a 354-residue protein sequence, read N- to C-terminus: Rhodopsin (354 aa).

The Extracellular segment spans residues 1-36 (MNGTEGPMFYVPMSNATGVVKSPYDYPQYYLVAPWA). 2 N-linked (GlcNAc...) asparagine glycosylation sites follow: N2 and N15. Residues 37 to 61 (YGCLAAYMFFLIITGFPINFLTLYV) traverse the membrane as a helical segment. Residues 62–73 (TIEHKKLRTPLN) lie on the Cytoplasmic side of the membrane. Residues 74-96 (YILLNLAISDLFMVFGGFTTTMY) form a helical membrane-spanning segment. The Extracellular portion of the chain corresponds to 97–110 (TSLHGYFVFGRIGC). An intrachain disulfide couples C110 to C187. Residues 111 to 133 (NLEGFFATLGGEMGLWSLVVLAF) traverse the membrane as a helical segment. The 'Ionic lock' involved in activated form stabilization motif lies at 134–136 (ERW). Over 134–152 (ERWMVVCKPVSNFRFGENH) the chain is Cytoplasmic. Residues 153–173 (AIMGVVFTWFMACTCAVPPLV) traverse the membrane as a helical segment. Topologically, residues 174–202 (GWSRYIPEGMQCSCGVDYYTRAPGYNNES) are extracellular. A helical membrane pass occupies residues 203–224 (FVIYMFLVHFIIPLIVIFFCYG). Topologically, residues 225–252 (RLVCTVKDAAAQQQESETTQRAEREVTR) are cytoplasmic. Residues 253–274 (MVVIMVIGFLICWIPYASVAWY) form a helical membrane-spanning segment. Over 275–286 (IFTHQGSEFGPV) the chain is Extracellular. Residues 287 to 308 (FMTVPAFFAKSAAVYNPCIYIC) traverse the membrane as a helical segment. An N6-(retinylidene)lysine modification is found at K296. The Cytoplasmic segment spans residues 309-354 (MNKQFRHCMITTLCCGKNPFEEEEGASTTASKTEASSVSSSSVSPA). 2 S-palmitoyl cysteine lipidation sites follow: C322 and C323. The tract at residues 333–354 (GASTTASKTEASSVSSSSVSPA) is disordered. Positions 334 to 354 (ASTTASKTEASSVSSSSVSPA) are enriched in low complexity.

Belongs to the G-protein coupled receptor 1 family. Opsin subfamily. Post-translationally, phosphorylated on some or all of the serine and threonine residues present in the C-terminal region. Contains one covalently linked retinal chromophore.

Its subcellular location is the membrane. The protein resides in the cell projection. It is found in the cilium. It localises to the photoreceptor outer segment. Its function is as follows. Photoreceptor required for image-forming vision at low light intensity. While most salt water fish species use retinal as chromophore, most freshwater fish use 3-dehydroretinal, or a mixture of retinal and 3-dehydroretinal. Light-induced isomerization of 11-cis to all-trans retinal triggers a conformational change that activates signaling via G-proteins. Subsequent receptor phosphorylation mediates displacement of the bound G-protein alpha subunit by arrestin and terminates signaling. In Cyprinus carpio (Common carp), this protein is Rhodopsin (rho).